The sequence spans 230 residues: Cytidylate kinase (230 aa).

An ATP-binding site is contributed by 12 to 20 (GPSGAGKGT).

The protein belongs to the cytidylate kinase family. Type 1 subfamily.

The protein localises to the cytoplasm. It catalyses the reaction CMP + ATP = CDP + ADP. The catalysed reaction is dCMP + ATP = dCDP + ADP. This chain is Cytidylate kinase, found in Yersinia pseudotuberculosis serotype O:1b (strain IP 31758).